A 425-amino-acid polypeptide reads, in one-letter code: MLDLKRIRTDFDTVAAKLKKRGVSEDTLTHLKELDEKRRALLVQSEELKAERNIASAAIAQAKRQKEDATQQIADMQKVSADIKTIDNQLVAIDQQVTDIITVLPNTPHDSVPVGADEEDNVEIRRWGTPRDFDFEVKAHWDLGEDLDILDWERGAKVTGARFLFYKNLGARLERALYNFMLDEHIKEGYQEIITPYMVNHDSMFGTGQYPKFKEDTFELADTNFVLIPTAEVPLTNYYRGEILDGKELPIYFTAMSPSFRSEAGSAGRDTRGLIRLHQFHKVEMVKFAKPEESYQELEKMTANAENILQKLGLPYRVISLCTGDMGFSAAKTYDVEVWIPAQNTYREISSCSNTEDFQARRAQIRYRDEADGKVKLLHTLNGSGLAVGRTVAAILENYQNEDGSVTIPEVLRPYMGGETVISPK.

Residue 230 to 232 (TAE) participates in L-serine binding. 261-263 (RSE) is a binding site for ATP. Position 284 (Glu284) interacts with L-serine. 348–351 (EISS) contributes to the ATP binding site. Ser384 serves as a coordination point for L-serine.

It belongs to the class-II aminoacyl-tRNA synthetase family. Type-1 seryl-tRNA synthetase subfamily. As to quaternary structure, homodimer. The tRNA molecule binds across the dimer.

It is found in the cytoplasm. The catalysed reaction is tRNA(Ser) + L-serine + ATP = L-seryl-tRNA(Ser) + AMP + diphosphate + H(+). It catalyses the reaction tRNA(Sec) + L-serine + ATP = L-seryl-tRNA(Sec) + AMP + diphosphate + H(+). Its pathway is aminoacyl-tRNA biosynthesis; selenocysteinyl-tRNA(Sec) biosynthesis; L-seryl-tRNA(Sec) from L-serine and tRNA(Sec): step 1/1. Catalyzes the attachment of serine to tRNA(Ser). Is also able to aminoacylate tRNA(Sec) with serine, to form the misacylated tRNA L-seryl-tRNA(Sec), which will be further converted into selenocysteinyl-tRNA(Sec). In Streptococcus pyogenes serotype M49 (strain NZ131), this protein is Serine--tRNA ligase.